We begin with the raw amino-acid sequence, 102 residues long: Small ribosomal subunit protein uS10 (102 aa).

The protein belongs to the universal ribosomal protein uS10 family. As to quaternary structure, part of the 30S ribosomal subunit.

Involved in the binding of tRNA to the ribosomes. This Fervidobacterium nodosum (strain ATCC 35602 / DSM 5306 / Rt17-B1) protein is Small ribosomal subunit protein uS10.